We begin with the raw amino-acid sequence, 212 residues long: Imidazole glycerol phosphate synthase subunit HisH 2 (212 aa).

The Glutamine amidotransferase type-1 domain maps to 4-211 (HLGLIDYGMG…LDWLQRGAPI (208 aa)). Cysteine 82 acts as the Nucleophile in catalysis. Catalysis depends on residues histidine 186 and glutamate 188.

Heterodimer of HisH and HisF.

It is found in the cytoplasm. The catalysed reaction is 5-[(5-phospho-1-deoxy-D-ribulos-1-ylimino)methylamino]-1-(5-phospho-beta-D-ribosyl)imidazole-4-carboxamide + L-glutamine = D-erythro-1-(imidazol-4-yl)glycerol 3-phosphate + 5-amino-1-(5-phospho-beta-D-ribosyl)imidazole-4-carboxamide + L-glutamate + H(+). It carries out the reaction L-glutamine + H2O = L-glutamate + NH4(+). The protein operates within amino-acid biosynthesis; L-histidine biosynthesis; L-histidine from 5-phospho-alpha-D-ribose 1-diphosphate: step 5/9. Its function is as follows. IGPS catalyzes the conversion of PRFAR and glutamine to IGP, AICAR and glutamate. The HisH subunit provides the glutamine amidotransferase activity that produces the ammonia necessary to HisF for the synthesis of IGP and AICAR. The protein is Imidazole glycerol phosphate synthase subunit HisH 2 (hisH2) of Parasynechococcus marenigrum (strain WH8102).